Consider the following 315-residue polypeptide: Solute carrier family 25 member 32 (315 aa).

3 Solcar repeats span residues 20–109 (HVRY…IKSY), 118–209 (LEAT…LKLK), and 222–306 (LSTV…VSHF). A run of 6 helical transmembrane segments spans residues 26–43 (LVAGVSGGVLSNLALHPL), 89–106 (VWGAGLSWGLYFFFYNAI), 123–143 (YLVSAAEAGAMTLCITNPLWV), 186–203 (FVPGLFGTSHGALQFMAY), 227–243 (YISVAALSKIFAVAATY), and 281–300 (GIAPNLIRVTPACCITFVVY).

Belongs to the mitochondrial carrier (TC 2.A.29) family.

The protein localises to the mitochondrion inner membrane. It carries out the reaction FAD(in) = FAD(out). Its function is as follows. Facilitates flavin adenine dinucleotide (FAD) translocation across the mitochondrial inner membrane into the mitochondrial matrix where it acts as a redox cofactor to assist flavoenzyme activities in fundamental metabolic processes including fatty acid beta-oxidation, amino acid and choline metabolism as well as mitochondrial electron transportation. In particular, provides FAD to DLD dehydrogenase of the glycine cleavage system, part of mitochondrial one-carbon metabolic pathway involved in neural tube closure in early embryogenesis. This Macaca fascicularis (Crab-eating macaque) protein is Solute carrier family 25 member 32.